A 92-amino-acid polypeptide reads, in one-letter code: Small ribosomal subunit protein uS19 (92 aa).

It belongs to the universal ribosomal protein uS19 family.

Functionally, protein S19 forms a complex with S13 that binds strongly to the 16S ribosomal RNA. The polypeptide is Small ribosomal subunit protein uS19 (Tolumonas auensis (strain DSM 9187 / NBRC 110442 / TA 4)).